The chain runs to 418 residues: MYGTNLLETMGKPTAGHLGMAVTFTPKAYRELHEKYAAPFTNRALLQQQDILRVHVDKLITALRAKARNKESVNMGEWSPHTQPDTYTTFDIIGDICFAEPFGCLDGGESNEWARAIINIFKAATWDQAIRRVAGTGTLLHKALVKIIIPAEAAQWRTIHFSNSKAKTLARLADPDRQHPDLIKHILDSEDSRAALSPTEIILNMVLFISAGSETTANTMTGWTYFMLRHPEARARATAEVRAAFASPRDIKWETVRALPYLNATLEEALRLFSPAPSNQPRVVPACGAVVAGCPLPSGTTVSVAPWAAVFSARNFADPERFAPERWLDEGGADPRYAADRRGASQPFSTGPRGCMGKNLAYFELRLVLAHLLWHFDLEPTDSAAGRECMRRWEQTDMDTYQTWMKPDLWVDLKEAQR.

A heme-binding site is contributed by cysteine 355.

This sequence belongs to the cytochrome P450 family. Heme is required as a cofactor.

The protein operates within hormone biosynthesis. Its function is as follows. Cytochrome P450 monooxygenase involved in the biosynthesis of abscisic acid (ABA), a phytohormone that acts antagonistically toward salicylic acid (SA), jasmonic acid (JA) and ethylene (ETH) signaling, to impede plant defense responses. During pathogen-host interaction, ABA plays a dual role in disease severity by increasing plant susceptibility and accelerating pathogenesis in the fungus itself. The first step of the pathway catalyzes the reaction from farnesyl diphosphate to alpha-ionylideneethane performed by the alpha-ionylideneethane synthase ABA3 via a three-step reaction mechanism involving 2 neutral intermediates, beta-farnesene and allofarnesene. The cytochrome P450 monooxygenase ABA1 might then be involved in the conversion of alpha-ionylideneethane to alpha-ionylideneacetic acid. Alpha-ionylideneacetic acid is further converted to abscisic acid in 2 steps involving the cytochrome P450 monooxygenase ABA2 and the short-chain dehydrogenase/reductase ABA4, via the intermediates 1'-deoxy-ABA or 1',4'-trans-diol-ABA, depending on the order of action of these 2 enzymes. ABA2 is responsible for the hydroxylation of carbon atom C-1' and ABA4 might be involved in the oxidation of the C-4' carbon atom. This chain is Cytochrome P450 monooxygenase ABA2, found in Pyricularia oryzae (strain Y34) (Rice blast fungus).